Here is a 181-residue protein sequence, read N- to C-terminus: Glucose-1-phosphate adenylyltransferase large subunit 2 (181 aa).

It belongs to the bacterial/plant glucose-1-phosphate adenylyltransferase family. As to quaternary structure, heterotetramer. In terms of tissue distribution, leaves.

It is found in the plastid. The protein localises to the chloroplast. The protein resides in the amyloplast. It carries out the reaction alpha-D-glucose 1-phosphate + ATP + H(+) = ADP-alpha-D-glucose + diphosphate. It functions in the pathway glycan biosynthesis; starch biosynthesis. Its activity is regulated as follows. Highly active without 3'phosphoglycerate, and is only slightly affected by the activator 3'phosphoglycerate and inhibitor orthophosphate. Functionally, this protein plays a role in synthesis of starch. It catalyzes the synthesis of the activated glycosyl donor, ADP-glucose from Glc-1-P and ATP. The polypeptide is Glucose-1-phosphate adenylyltransferase large subunit 2 (Hordeum vulgare (Barley)).